The primary structure comprises 153 residues: MRVYEGKLISKGQKFGIIVGRFNEFIGGKLLSGAIDALKRHGVDEENIEIAWVPGAFEMPLIAKKMAKSQKYDGVICLGAVIRGATPHFDYVSSEVTKGVASVSLETEVPVIFGVLTTDTIEQAIERAGTKAGNKGFEAAVTAIEMANLLKEF.

Residues F22, A56–E58, and A80–I82 each bind 5-amino-6-(D-ribitylamino)uracil. A85–T86 contacts (2S)-2-hydroxy-3-oxobutyl phosphate. Residue H88 is the Proton donor of the active site. F113 provides a ligand contact to 5-amino-6-(D-ribitylamino)uracil. R127 contributes to the (2S)-2-hydroxy-3-oxobutyl phosphate binding site.

The protein belongs to the DMRL synthase family.

It catalyses the reaction (2S)-2-hydroxy-3-oxobutyl phosphate + 5-amino-6-(D-ribitylamino)uracil = 6,7-dimethyl-8-(1-D-ribityl)lumazine + phosphate + 2 H2O + H(+). Its pathway is cofactor biosynthesis; riboflavin biosynthesis; riboflavin from 2-hydroxy-3-oxobutyl phosphate and 5-amino-6-(D-ribitylamino)uracil: step 1/2. Functionally, catalyzes the formation of 6,7-dimethyl-8-ribityllumazine by condensation of 5-amino-6-(D-ribitylamino)uracil with 3,4-dihydroxy-2-butanone 4-phosphate. This is the penultimate step in the biosynthesis of riboflavin. This chain is 6,7-dimethyl-8-ribityllumazine synthase, found in Alkaliphilus metalliredigens (strain QYMF).